The following is a 113-amino-acid chain: Molt-inhibiting hormone (113 aa).

Residues 1-35 form the signal peptide; it reads MMSLAHSKFSCQRTRLLAVVLLAALWSSSLQQAAA. Disulfide bonds link Cys42–Cys79, Cys59–Cys75, and Cys62–Cys88.

Belongs to the arthropod CHH/MIH/GIH/VIH hormone family.

The protein resides in the secreted. Functionally, inhibits Y-organs where molting hormone (ecdysteroid) is secreted. A molting cycle is initiated when MIH secretion diminishes or stops. This chain is Molt-inhibiting hormone, found in Callinectes sapidus (Blue crab).